A 211-amino-acid chain; its full sequence is Redox-sensing transcriptional repressor Rex (211 aa).

A DNA-binding region (H-T-H motif) is located at residues 17–56 (LYYRFVSSLKSKGIDRVNSKAISDALQIDSATIRRDFSYF). 91 to 96 (GVGNLG) is an NAD(+) binding site.

The protein belongs to the transcriptional regulatory Rex family. In terms of assembly, homodimer.

The protein localises to the cytoplasm. In terms of biological role, modulates transcription in response to changes in cellular NADH/NAD(+) redox state. The chain is Redox-sensing transcriptional repressor Rex from Staphylococcus aureus (strain Mu3 / ATCC 700698).